Here is a 614-residue protein sequence, read N- to C-terminus: UvrABC system protein C (614 aa).

Positions 12 to 89 constitute a GIY-YIG domain; sequence DKPGVYLFRG…IKEHRPRYNV (78 aa). The 36-residue stretch at 198-233 folds into the UVR domain; that stretch reads ADLVRGLARKMEAAAANLEFERAAELRDQLRAVEQV.

Belongs to the UvrC family. In terms of assembly, interacts with UvrB in an incision complex.

It localises to the cytoplasm. Functionally, the UvrABC repair system catalyzes the recognition and processing of DNA lesions. UvrC both incises the 5' and 3' sides of the lesion. The N-terminal half is responsible for the 3' incision and the C-terminal half is responsible for the 5' incision. In Desulforudis audaxviator (strain MP104C), this protein is UvrABC system protein C.